Consider the following 366-residue polypeptide: NADH-quinone oxidoreductase subunit D (366 aa).

This sequence belongs to the complex I 49 kDa subunit family. In terms of assembly, NDH-1 is composed of 14 different subunits. Subunits NuoB, C, D, E, F, and G constitute the peripheral sector of the complex.

Its subcellular location is the cell membrane. The enzyme catalyses a quinone + NADH + 5 H(+)(in) = a quinol + NAD(+) + 4 H(+)(out). Functionally, NDH-1 shuttles electrons from NADH, via FMN and iron-sulfur (Fe-S) centers, to quinones in the respiratory chain. The immediate electron acceptor for the enzyme in this species is believed to be a menaquinone. Couples the redox reaction to proton translocation (for every two electrons transferred, four hydrogen ions are translocated across the cytoplasmic membrane), and thus conserves the redox energy in a proton gradient. The polypeptide is NADH-quinone oxidoreductase subunit D (Bacillus anthracis).